A 381-amino-acid chain; its full sequence is MSCFGGGVEDDRTKEQKRQNKLIDQQLKKDKKAYRALHRLLLLGAGESGKSTVVKQMKILHKDGFSDEERKEKLVDIKSNIRDIVVTVTKAMSELDPPVSLGSPENEEHLQYLWSDEVTRKDYDYPEKFFEAVSKVWNDSGVQTCSARSNEYQLIDSAAYFMASEKQAQLKEPNYIPNDQDILRCRVLTSGIFETRFVVDKVHFYMFGVGGQRIERRKWIQCFNDVTAIIFVVACSSFNMVIREDLYTNRLRESLDLFEQIWNNRWLRTVSIILFLNKQDILKEKIDAGKRVENYFLEFNSYRPPDNLDLSKEPPGSSSTFLKARYFFRDMFLRITNKSHDGRHFCYPHFTTAVDTENIRRVFDSCRDIIQRMHLQKYELL.

C3 is lipidated: S-palmitoyl cysteine. The 346-residue stretch at A36–L381 folds into the G-alpha domain. Residues R39–T52 are G1 motif. GTP is bound by residues G44–S51, L183–T189, G208–Q212, N277–D280, and A353. Mg(2+) contacts are provided by S51 and T189. Positions D181 to T189 are G2 motif. The interval F204–R213 is G3 motif. Positions I273–D280 are G4 motif. The interval T351 to T356 is G5 motif.

The protein belongs to the G-alpha family. G(s) subfamily. In terms of assembly, g proteins are composed of 3 units; alpha, beta and gamma. The alpha chain contains the guanine nucleotide binding site.

Functionally, guanine nucleotide-binding proteins (G proteins) are involved as modulators or transducers in various transmembrane signaling systems. The G(s) protein is involved in hormonal regulation of adenylate cyclase: it activates the cyclase in response to beta-adrenergic stimuli. In Geodia cydonium (Sponge), this protein is Guanine nucleotide-binding protein G(s) subunit alpha.